The primary structure comprises 228 residues: Mitochondrial assembly of ribosomal large subunit protein 1 (228 aa).

The interval 53-77 is disordered; sequence SLTRGLHHGPQPEERTAGDARLQPG.

This sequence belongs to the Iojap/RsfS family. As to quaternary structure, associates with the mitochondrial ribosome large subunit (39S) via interaction with MRPL12 and/or MRPL14. The interaction generates steric hindrance that is expected to prevent premature association of the 28S and 39S ribosomal subunits. Identified in a complex composed of MALSU1, MIEF1 upstream open reading frame protein and NDUFAB1; within the trimeric complex, MIEF1 upstream open reading frame protein functions as a bridging scaffold that interacts with MALSU1 on one side, and with NDUFAB1 on the other side. Interacts with MRPL12 and MRPL14.

It localises to the mitochondrion matrix. Required for normal mitochondrial ribosome function and mitochondrial translation. May play a role in ribosome biogenesis by preventing premature association of the 28S and 39S ribosomal subunits. Interacts with mitochondrial ribosomal protein uL14m (MRPL14), probably blocking formation of intersubunit bridge B8, preventing association of the 28S and 39S ribosomal subunits. Addition to isolated mitochondrial ribosomal subunits partially inhibits translation, probably by interfering with the association of the 28S and 39S ribosomal subunits and the formation of functional ribosomes. May also participate in the assembly and/or regulation of the stability of the large subunit of the mitochondrial ribosome. May function as a ribosomal silencing factor. The protein is Mitochondrial assembly of ribosomal large subunit protein 1 (Malsu1) of Mus musculus (Mouse).